Here is a 352-residue protein sequence, read N- to C-terminus: Ubiquitin thioesterase otulin (352 aa).

The disordered stretch occupies residues 1 to 49; it reads MSRGTMPQPGAWPGASCAETPAREAGAAARDGGKVTAGAQPRAATRCPA. Low complexity predominate over residues 18–30; that stretch reads AETPAREAGAAAR. A coiled-coil region spans residues 49–73; sequence AEHEEDMYRAADEIEKEKELLIHER. The short motif at 52-57 is the PIM motif element; sequence EEDMYR. A Phosphotyrosine modification is found at Y56. Linear diubiquitin binding stretches follow at residues 95-96 and 124-126; these read EW and RGD. The 229-residue stretch at 118 to 346 folds into the OTU domain; the sequence is TSIRRVRGDN…DRHYNIPVRV (229 aa). Residue D126 is part of the active site. The active-site Nucleophile is C129. Linear diubiquitin binding stretches follow at residues 255 to 259, 283 to 289, and 336 to 338; these read FFSVL, TGGLEQV, and DDR. H339 is an active-site residue. The PDZ-binding motif lies at 349-352; sequence ETSV.

It belongs to the peptidase C65 family. Otulin subfamily. As to quaternary structure, interacts (via the PUB domain) with RNF31 (via the PIM motif); the interaction is direct. Interacts with DVL2. Post-translationally, ubiquitinated. In terms of processing, acetylated. Phosphorylated. Phosphorylation at Tyr-56 prevents interaction with RNF31; dephosphorylation promotes interaction with RNF31 and the LUBAC complex.

It is found in the cytoplasm. It carries out the reaction Thiol-dependent hydrolysis of ester, thioester, amide, peptide and isopeptide bonds formed by the C-terminal Gly of ubiquitin (a 76-residue protein attached to proteins as an intracellular targeting signal).. Functionally, deubiquitinase that specifically removes linear ('Met-1'-linked) polyubiquitin chains to substrates and acts as a regulator of angiogenesis and innate immune response. Required during angiogenesis, craniofacial and neuronal development by regulating the canonical Wnt signaling together with the LUBAC complex. Acts as a negative regulator of NF-kappa-B by regulating the activity of the LUBAC complex. OTULIN function is mainly restricted to homeostasis of the LUBAC complex: acts by removing 'Met-1'-linked autoubiquitination of the LUBAC complex, thereby preventing inactivation of the LUBAC complex. Acts as a key negative regulator of inflammation by restricting spontaneous inflammation and maintaining immune homeostasis. In myeloid cell, required to prevent unwarranted secretion of cytokines leading to inflammation and autoimmunity by restricting linear polyubiquitin formation. Plays a role in innate immune response by restricting linear polyubiquitin formation on LUBAC complex in response to NOD2 stimulation, probably to limit NOD2-dependent pro-inflammatory signaling. The polypeptide is Ubiquitin thioesterase otulin (Mus musculus (Mouse)).